Consider the following 358-residue polypeptide: Molybdenum import ATP-binding protein ModC (358 aa).

One can recognise an ABC transporter domain in the interval 3–228 (INVKQKLGDL…LEMRPWLPAK (226 aa)). 30–37 (GRSGAGKT) provides a ligand contact to ATP. Positions 289-356 (QTSIRNVLLA…IKGVSVTKDD (68 aa)) constitute a Mop domain.

It belongs to the ABC transporter superfamily. Molybdate importer (TC 3.A.1.8) family. In terms of assembly, the complex is composed of two ATP-binding proteins (ModC), two transmembrane proteins (ModB) and a solute-binding protein (ModA).

Its subcellular location is the cell inner membrane. It carries out the reaction molybdate(out) + ATP + H2O = molybdate(in) + ADP + phosphate + H(+). Part of the ABC transporter complex ModABC involved in molybdenum import. Responsible for energy coupling to the transport system. The sequence is that of Molybdenum import ATP-binding protein ModC from Photobacterium profundum (strain SS9).